A 213-amino-acid chain; its full sequence is Uridine kinase (213 aa).

An ATP-binding site is contributed by G15–S22.

Belongs to the uridine kinase family.

The protein resides in the cytoplasm. It catalyses the reaction uridine + ATP = UMP + ADP + H(+). It carries out the reaction cytidine + ATP = CMP + ADP + H(+). It participates in pyrimidine metabolism; CTP biosynthesis via salvage pathway; CTP from cytidine: step 1/3. Its pathway is pyrimidine metabolism; UMP biosynthesis via salvage pathway; UMP from uridine: step 1/1. This Escherichia fergusonii (strain ATCC 35469 / DSM 13698 / CCUG 18766 / IAM 14443 / JCM 21226 / LMG 7866 / NBRC 102419 / NCTC 12128 / CDC 0568-73) protein is Uridine kinase.